The sequence spans 379 residues: UDP-4-amino-4-deoxy-L-arabinose--oxoglutarate aminotransferase (379 aa).

At Lys182 the chain carries N6-(pyridoxal phosphate)lysine.

The protein belongs to the DegT/DnrJ/EryC1 family. ArnB subfamily. In terms of assembly, homodimer. The cofactor is pyridoxal 5'-phosphate.

The catalysed reaction is UDP-4-amino-4-deoxy-beta-L-arabinose + 2-oxoglutarate = UDP-beta-L-threo-pentopyranos-4-ulose + L-glutamate. The protein operates within nucleotide-sugar biosynthesis; UDP-4-deoxy-4-formamido-beta-L-arabinose biosynthesis; UDP-4-deoxy-4-formamido-beta-L-arabinose from UDP-alpha-D-glucuronate: step 2/3. Its pathway is bacterial outer membrane biogenesis; lipopolysaccharide biosynthesis. Its function is as follows. Catalyzes the conversion of UDP-4-keto-arabinose (UDP-Ara4O) to UDP-4-amino-4-deoxy-L-arabinose (UDP-L-Ara4N). The modified arabinose is attached to lipid A and is required for resistance to polymyxin and cationic antimicrobial peptides. The protein is UDP-4-amino-4-deoxy-L-arabinose--oxoglutarate aminotransferase of Salmonella agona (strain SL483).